Here is a 559-residue protein sequence, read N- to C-terminus: Putative protease Do-like 3, mitochondrial (559 aa).

The transit peptide at 1 to 48 directs the protein to the mitochondrion; the sequence is MSFLCVRTVSRFRSLSRALAPGFLLLHGNAVPKTAVFFRQQSSNTRLF. The disordered stretch occupies residues 59 to 81; it reads ENNSKSALKNKLPPGKEVSSKDA. The interval 100-292 is serine protease; sequence VFTVSSKPRL…FLNAIEESGE (193 aa). Residues H138, D169, and S247 each act as charge relay system in the active site. In terms of domain architecture, PDZ spans 300-380; it reads NLTYQKMDND…HLVSMKKPCE (81 aa). The tract at residues 538 to 559 is disordered; sequence SEDLQPKQQNKRSKVPPKSKEH. Positions 546–559 are enriched in basic residues; sequence QNKRSKVPPKSKEH.

The protein belongs to the peptidase S1C family.

The protein resides in the mitochondrion matrix. Putative serine protease. This chain is Putative protease Do-like 3, mitochondrial (DEGP3), found in Arabidopsis thaliana (Mouse-ear cress).